An 883-amino-acid chain; its full sequence is Alanine--tRNA ligase (883 aa).

Residues His563, His567, Cys673, and His677 each contribute to the Zn(2+) site.

It belongs to the class-II aminoacyl-tRNA synthetase family. Requires Zn(2+) as cofactor.

It is found in the cytoplasm. The enzyme catalyses tRNA(Ala) + L-alanine + ATP = L-alanyl-tRNA(Ala) + AMP + diphosphate. Functionally, catalyzes the attachment of alanine to tRNA(Ala) in a two-step reaction: alanine is first activated by ATP to form Ala-AMP and then transferred to the acceptor end of tRNA(Ala). Also edits incorrectly charged Ser-tRNA(Ala) and Gly-tRNA(Ala) via its editing domain. The sequence is that of Alanine--tRNA ligase from Caulobacter sp. (strain K31).